The following is a 428-amino-acid chain: NADH-ubiquinone oxidoreductase chain 2 (428 aa).

The next 14 membrane-spanning stretches (helical) occupy residues Ile22–Gly42, Leu59–Asn79, Leu84–Thr104, Leu108–Leu128, Leu140–Leu160, Ile185–Pro205, Trp218–Leu238, Leu241–Ala261, Phe269–Asp289, Ala292–Ser312, Leu332–Phe352, Leu356–Leu376, Tyr384–Ile404, and Tyr408–Leu428.

It belongs to the complex I subunit 2 family.

The protein resides in the mitochondrion inner membrane. It catalyses the reaction a ubiquinone + NADH + 5 H(+)(in) = a ubiquinol + NAD(+) + 4 H(+)(out). Its function is as follows. Core subunit of the mitochondrial membrane respiratory chain NADH dehydrogenase (Complex I) that is believed to belong to the minimal assembly required for catalysis. Complex I functions in the transfer of electrons from NADH to the respiratory chain. The immediate electron acceptor for the enzyme is believed to be ubiquinone. The polypeptide is NADH-ubiquinone oxidoreductase chain 2 (Hyaloraphidium curvatum (Lower fungus)).